We begin with the raw amino-acid sequence, 930 residues long: Alanine--tRNA ligase (930 aa).

Positions 595, 599, 700, and 704 each coordinate Zn(2+).

It belongs to the class-II aminoacyl-tRNA synthetase family. It depends on Zn(2+) as a cofactor.

The protein resides in the cytoplasm. The catalysed reaction is tRNA(Ala) + L-alanine + ATP = L-alanyl-tRNA(Ala) + AMP + diphosphate. Functionally, catalyzes the attachment of alanine to tRNA(Ala) in a two-step reaction: alanine is first activated by ATP to form Ala-AMP and then transferred to the acceptor end of tRNA(Ala). Also edits incorrectly charged Ser-tRNA(Ala) and Gly-tRNA(Ala) via its editing domain. In Malacoplasma penetrans (strain HF-2) (Mycoplasma penetrans), this protein is Alanine--tRNA ligase.